The chain runs to 139 residues: Thioredoxin 2 (139 aa).

The segment at Cys5–Arg18 is a zinc-finger region. The Thioredoxin domain maps to Gly26 to Leu139. Residues Cys64 and Cys67 are joined by a disulfide bond.

The protein belongs to the thioredoxin family.

It localises to the cytoplasm. It catalyses the reaction [protein]-dithiol + NAD(+) = [protein]-disulfide + NADH + H(+). The enzyme catalyses [protein]-dithiol + NADP(+) = [protein]-disulfide + NADPH + H(+). Efficient electron donor for the essential enzyme ribonucleotide reductase. Is also able to reduce the interchain disulfide bridges of insulin. This chain is Thioredoxin 2 (trxC), found in Escherichia coli O6:H1 (strain CFT073 / ATCC 700928 / UPEC).